A 335-amino-acid chain; its full sequence is Acetyl-coenzyme A carboxylase carboxyl transferase subunit alpha (335 aa).

Residues threonine 48–alanine 308 form the CoA carboxyltransferase C-terminal domain.

The protein belongs to the AccA family. Acetyl-CoA carboxylase is a heterohexamer composed of biotin carboxyl carrier protein (AccB), biotin carboxylase (AccC) and two subunits each of ACCase subunit alpha (AccA) and ACCase subunit beta (AccD).

The protein localises to the cytoplasm. It carries out the reaction N(6)-carboxybiotinyl-L-lysyl-[protein] + acetyl-CoA = N(6)-biotinyl-L-lysyl-[protein] + malonyl-CoA. Its pathway is lipid metabolism; malonyl-CoA biosynthesis; malonyl-CoA from acetyl-CoA: step 1/1. In terms of biological role, component of the acetyl coenzyme A carboxylase (ACC) complex. First, biotin carboxylase catalyzes the carboxylation of biotin on its carrier protein (BCCP) and then the CO(2) group is transferred by the carboxyltransferase to acetyl-CoA to form malonyl-CoA. The protein is Acetyl-coenzyme A carboxylase carboxyl transferase subunit alpha of Chlorobium phaeovibrioides (strain DSM 265 / 1930) (Prosthecochloris vibrioformis (strain DSM 265)).